The sequence spans 210 residues: Probable septum site-determining protein MinC (210 aa).

Belongs to the MinC family. Interacts with MinD and FtsZ.

Functionally, cell division inhibitor that blocks the formation of polar Z ring septums. Rapidly oscillates between the poles of the cell to destabilize FtsZ filaments that have formed before they mature into polar Z rings. Prevents FtsZ polymerization. The polypeptide is Probable septum site-determining protein MinC (Clostridium novyi (strain NT)).